A 226-amino-acid chain; its full sequence is Gap junction beta-2 protein (226 aa).

The stretch at 2–13 (DWGALQTILGGV) is an intramembrane region. The Cytoplasmic segment spans residues 14 to 20 (NKHSTSI). A helical membrane pass occupies residues 21–40 (GKIWLTVLFIFRIMILVVAA). The Extracellular portion of the chain corresponds to 41–73 (KEVWGDEQADFVCNTLQPGCKNVCYDHYFPISH). The Ca(2+) site is built by Glu-42, Gly-45, and Glu-47. Cystine bridges form between Cys-53–Cys-180, Cys-60–Cys-174, and Cys-64–Cys-169. Residues 74–94 (IRLWALQLIFVSTPALLVAMH) form a helical membrane-spanning segment. Residues 95–135 (VAYRRHEKKRKFIKGEIKSEFKDIEEIKTQKVRIEGSLWWT) are Cytoplasmic-facing. The helical transmembrane segment at 136 to 156 (YTSSIFFRVIFEAAFMYVFYV) threads the bilayer. The Extracellular segment spans residues 157–189 (MYDGFSMQRLVKCNAWPCPNTVDCFVSRPTEKT). A helical membrane pass occupies residues 190–210 (VFTVFMIAVSGICILLNVTEL). Residues 211–226 (CYLLIRYCSGRSKKPV) lie on the Cytoplasmic side of the membrane.

It belongs to the connexin family. Beta-type (group I) subfamily. As to quaternary structure, a hemichannel or connexon is composed of a hexamer of connexins. A functional gap junction is formed by the apposition of two hemichannels. Forms heteromeric channels with GJB4. Interacts with CNST.

The protein resides in the cell membrane. Its subcellular location is the cell junction. It localises to the gap junction. Structural component of gap junctions. Gap junctions are dodecameric channels that connect the cytoplasm of adjoining cells. They are formed by the docking of two hexameric hemichannels, one from each cell membrane. Small molecules and ions diffuse from one cell to a neighboring cell via the central pore. In Pongo pygmaeus (Bornean orangutan), this protein is Gap junction beta-2 protein (GJB2).